We begin with the raw amino-acid sequence, 472 residues long: uncharacterized protein (472 aa).

14 helical membrane passes run 14-34 (VIVGILLAGAFVAILNQTLLI), 53-73 (WLTTSFMLTNGILIPITAFLI), 80-100 (ALLITAMSIFTAGTVVGAFAP), 113-133 (AAGAGIMMPLMQTVFLTIFPI), 142-162 (MVGLVISFAPAIGPTLSGWAV), 169-189 (SLFYIILPFAVIDLILASILM), 202-222 (ILSVILSTFGFGGLLYGFSSV), 227-247 (WSSSTVLISLLVGVIALLLFI), 263-283 (FTFGVFSLTTLLGTLVFALLI), 302-322 (FDTGLMLLPGAVVMGFMSPII), 333-353 (GLAIAGFCIIFLTSLPFMQLT), 359-379 (AWIVVLYTVRLLGTAMIMMPV), 405-427 (VGGSIGTALLVSVMSNQAAHAGT), and 437-457 (GMNAAFIVAAVIALVGFLLSF).

This sequence belongs to the major facilitator superfamily. EmrB family.

The protein localises to the cell membrane. This is an uncharacterized protein from Bacillus subtilis (strain 168).